The chain runs to 176 residues: NADH-dependent flavin reductase (176 aa).

Residues 39–46 and 48–49 contribute to the FAD site; these read EDSVHGMT and NA. NAD(+) is bound at residue S52. FAD is bound by residues 63–65, 69–70, and 95–96; these read SIS, KM, and HF. Residues H137 and 157–160 contribute to the NAD(+) site; that span reads FYTG.

It belongs to the non-flavoprotein flavin reductase family. In terms of assembly, homodimer. 4-nitrophenol 2-monooxygenase complex consists of an oxygenase component NphA1 and a flavin reductase component NphA2.

The catalysed reaction is a reduced flavin + NAD(+) = an oxidized flavin + NADH + 2 H(+). Functionally, catalyzes the reduction of FAD with the concomitant oxidation of NADH. NAD is the physiological electron donor. Subsequently, the reduced flavins diffuse to the oxygenase component NphA2. The polypeptide is NADH-dependent flavin reductase (nphA2) (Rhodococcus sp).